Consider the following 318-residue polypeptide: NADH-ubiquinone oxidoreductase chain 1 (318 aa).

8 helical membrane passes run 2–22, 70–90, 102–122, 147–167, 171–191, 222–242, 253–273, and 294–314; these read FLTN…FLTL, MFLM…IPLP, LLFM…SGWA, AIIL…TLII, YMWL…STLA, LFFL…TILF, ELYT…FLWI, and LPLT…TAAI.

This sequence belongs to the complex I subunit 1 family.

The protein resides in the mitochondrion inner membrane. The enzyme catalyses a ubiquinone + NADH + 5 H(+)(in) = a ubiquinol + NAD(+) + 4 H(+)(out). Its function is as follows. Core subunit of the mitochondrial membrane respiratory chain NADH dehydrogenase (Complex I) that is believed to belong to the minimal assembly required for catalysis. Complex I functions in the transfer of electrons from NADH to the respiratory chain. The immediate electron acceptor for the enzyme is believed to be ubiquinone. The polypeptide is NADH-ubiquinone oxidoreductase chain 1 (MT-ND1) (Diaemus youngi (White-winged vampire bat)).